The following is a 631-amino-acid chain: Phosphomethylpyrimidine synthase (631 aa).

Substrate is bound by residues Asn-239, Met-268, Tyr-297, His-333, 353–355, 394–397, and Glu-433; these read SRG and DGLR. His-437 contacts Zn(2+). A substrate-binding site is contributed by Tyr-460. His-501 serves as a coordination point for Zn(2+). [4Fe-4S] cluster-binding residues include Cys-581, Cys-584, and Cys-589.

This sequence belongs to the ThiC family. As to quaternary structure, homodimer. It depends on [4Fe-4S] cluster as a cofactor.

The enzyme catalyses 5-amino-1-(5-phospho-beta-D-ribosyl)imidazole + S-adenosyl-L-methionine = 4-amino-2-methyl-5-(phosphooxymethyl)pyrimidine + CO + 5'-deoxyadenosine + formate + L-methionine + 3 H(+). It functions in the pathway cofactor biosynthesis; thiamine diphosphate biosynthesis. Its function is as follows. Catalyzes the synthesis of the hydroxymethylpyrimidine phosphate (HMP-P) moiety of thiamine from aminoimidazole ribotide (AIR) in a radical S-adenosyl-L-methionine (SAM)-dependent reaction. The chain is Phosphomethylpyrimidine synthase from Klebsiella pneumoniae (strain 342).